The chain runs to 456 residues: Shufflon protein D' (456 aa).

The tract at residues 1–361 (MKKYDRGWAS…TGAILSCQSG (361 aa)) is constant region. The segment at 362–456 (TWRKSNSGST…KCSYVVACQN (95 aa)) is variable region.

The sequence is that of Shufflon protein D' from Escherichia coli.